The primary structure comprises 723 residues: Nuclear intron maturase 3, mitochondrial (723 aa).

The N-terminal 26 residues, Met1–Leu26, are a transit peptide targeting the mitochondrion. Residues Val532–Asp597 are intron maturase type-2; degenerate. A THAP-type zinc finger spans residues Cys646 to His700.

The protein belongs to the plant nuclear intron maturase (nMat) family.

The protein resides in the mitochondrion. Functionally, nuclear-encoded maturase required for splicing of group-II introns in mitochondria. Necessary for mitochondrial biogenesis during early developmental stages. The protein is Nuclear intron maturase 3, mitochondrial of Arabidopsis thaliana (Mouse-ear cress).